We begin with the raw amino-acid sequence, 164 residues long: NADH-quinone oxidoreductase subunit I (164 aa).

2 consecutive 4Fe-4S ferredoxin-type domains span residues 56–85 (RRYE…IEAE) and 95–124 (TRYD…EGPN). Cys65, Cys68, Cys71, Cys75, Cys104, Cys107, Cys110, and Cys114 together coordinate [4Fe-4S] cluster.

The protein belongs to the complex I 23 kDa subunit family. NDH-1 is composed of 14 different subunits. Subunits NuoA, H, J, K, L, M, N constitute the membrane sector of the complex. It depends on [4Fe-4S] cluster as a cofactor.

The protein resides in the cell inner membrane. It catalyses the reaction a quinone + NADH + 5 H(+)(in) = a quinol + NAD(+) + 4 H(+)(out). In terms of biological role, NDH-1 shuttles electrons from NADH, via FMN and iron-sulfur (Fe-S) centers, to quinones in the respiratory chain. The immediate electron acceptor for the enzyme in this species is believed to be ubiquinone. Couples the redox reaction to proton translocation (for every two electrons transferred, four hydrogen ions are translocated across the cytoplasmic membrane), and thus conserves the redox energy in a proton gradient. The chain is NADH-quinone oxidoreductase subunit I from Anaplasma phagocytophilum (strain HZ).